Here is a 436-residue protein sequence, read N- to C-terminus: 3-ketoacyl-CoA thiolase (436 aa).

Catalysis depends on C99, which acts as the Acyl-thioester intermediate. Catalysis depends on proton acceptor residues H392 and C422.

This sequence belongs to the thiolase-like superfamily. Thiolase family. Heterotetramer of two alpha chains (FadJ) and two beta chains (FadI).

The protein localises to the cytoplasm. The catalysed reaction is an acyl-CoA + acetyl-CoA = a 3-oxoacyl-CoA + CoA. The protein operates within lipid metabolism; fatty acid beta-oxidation. Its function is as follows. Catalyzes the final step of fatty acid oxidation in which acetyl-CoA is released and the CoA ester of a fatty acid two carbons shorter is formed. The sequence is that of 3-ketoacyl-CoA thiolase from Salmonella heidelberg (strain SL476).